A 215-amino-acid chain; its full sequence is METQAEQQELETLPTTKMAQTNPTPGSLGPWKITIYDQENFQGKRMEFTSSCPNVSERSFDNVRSLKVESGAWIGYEHTSFCGQQFILERGEYPRWDAWSGSNAYHIERLMSFRPICSANHKESKMTIFEKENFIGRQWEISDDYPSLQAMGWFNNEVGSMKIQSGAWVCYQYPGYRGYQYILECDHHGGDYKHWREWGSHAQTSQIQSIRRIQQ.

Met1 is subject to N-acetylmethionine. A compositionally biased stretch (low complexity) spans 1 to 16; sequence METQAEQQELETLPTT. The disordered stretch occupies residues 1-29; it reads METQAEQQELETLPTTKMAQTNPTPGSLG. Residues 1-30 are N-terminal arm; sequence METQAEQQELETLPTTKMAQTNPTPGSLGP. Position 2 is an N-acetylalanine (Glu2). 2 consecutive Beta/gamma crystallin 'Greek key' domains span residues 31–70 and 71–117; these read WKITIYDQENFQGKRMEFTSSCPNVSERSFDNVRSLKVES and GAWI…RPIC. 2 positions are modified to S-glutathionyl cysteine; alternate: Cys82 and Cys117. Cys82 and Cys117 each carry S-methylcysteine; alternate. The segment at 118-123 is connecting peptide; the sequence is SANHKE. Beta/gamma crystallin 'Greek key' domains follow at residues 124-165 and 166-214; these read SKMT…KIQS and GAWV…RRIQ. Position 185 is an S-methylcysteine (Cys185).

The protein belongs to the beta/gamma-crystallin family. In terms of assembly, homo/heterodimer, or complexes of higher-order. The structure of beta-crystallin oligomers seems to be stabilized through interactions between the N-terminal arms. Interacts with CRYBA1. Specific cleavages in the N-terminal arm occur during lens maturation and give rise to several truncated forms. Cleavages do not seem to have adverse effects on solubility. In terms of processing, S-methylation and glutathionylation occur in normal young lenses and do not seem to be detrimental.

Its function is as follows. Crystallins are the dominant structural components of the vertebrate eye lens. The chain is Beta-crystallin A3 from Homo sapiens (Human).